The primary structure comprises 203 residues: Glycerol-3-phosphate acyltransferase (203 aa).

5 consecutive transmembrane segments (helical) span residues 10 to 30 (MLIL…GLIL), 59 to 79 (GAAA…VLLA), 87 to 107 (AAQV…WLGF), 116 to 136 (FLGL…LSWL), and 160 to 180 (LVLL…LMVF).

The protein belongs to the PlsY family. Probably interacts with PlsX.

It is found in the cell inner membrane. It carries out the reaction an acyl phosphate + sn-glycerol 3-phosphate = a 1-acyl-sn-glycero-3-phosphate + phosphate. It participates in lipid metabolism; phospholipid metabolism. Catalyzes the transfer of an acyl group from acyl-phosphate (acyl-PO(4)) to glycerol-3-phosphate (G3P) to form lysophosphatidic acid (LPA). This enzyme utilizes acyl-phosphate as fatty acyl donor, but not acyl-CoA or acyl-ACP. The polypeptide is Glycerol-3-phosphate acyltransferase (Ruegeria pomeroyi (strain ATCC 700808 / DSM 15171 / DSS-3) (Silicibacter pomeroyi)).